Consider the following 363-residue polypeptide: UV excision repair protein RAD23 homolog A (363 aa).

Residues 1–81 (MAVTITLKTL…VVVMVTKTKA (81 aa)) form the Ubiquitin-like domain. Positions 81 to 160 (AGQGTSAPPE…EDAASTLVTG (80 aa)) are disordered. The segment covering 85–103 (TSAPPEASPTAAPESSTSF) has biased composition (low complexity). A Glycyl lysine isopeptide (Lys-Gly) (interchain with G-Cter in ubiquitin) cross-link involves residue Lys122. 5 positions are modified to phosphoserine: Ser123, Ser128, Ser133, Ser136, and Ser138. Positions 126–147 (EESAPTTSPESVSGSVPSSGSS) are enriched in low complexity. The region spanning 161–201 (SEYETMLTEIMSMGYERERVVAALRASYNNPHRAVEYLLTG) is the UBA 1 domain. Residues 203-227 (PGSPEPEHGSVQESQVSEQPATEAA) form a disordered region. Ser205 bears the Phosphoserine mark. The span at 213 to 222 (VQESQVSEQP) shows a compositional bias: polar residues. 2 positions are modified to phosphoserine: Ser295 and Ser357. A UBA 2 domain is found at 318 to 358 (PQEKEAIERLKALGFPESLVIQAYFACEKNENLAANFLLSQ). The HIV-1 vpr binding stretch occupies residues 319 to 363 (QEKEAIERLKALGFPESLVIQAYFACEKNENLAANFLLSQNFDDE).

This sequence belongs to the RAD23 family. In terms of assembly, interacts with XPC; the interaction is suggesting the existence of a functional equivalent variant XPC complex. Interacts with PSMD4 and PSMC5. Interacts with ATXN3. Interacts with UBQLN2. As to quaternary structure, (Microbial infection) Interacts with HIV-1 Vpr.

The protein resides in the nucleus. In terms of biological role, multiubiquitin chain receptor involved in modulation of proteasomal degradation. Binds to 'Lys-48'-linked polyubiquitin chains in a length-dependent manner and with a lower affinity to 'Lys-63'-linked polyubiquitin chains. Proposed to be capable to bind simultaneously to the 26S proteasome and to polyubiquitinated substrates and to deliver ubiquitinated proteins to the proteasome. Functionally, involved in nucleotide excision repair and is thought to be functional equivalent for RAD23B in global genome nucleotide excision repair (GG-NER) by association with XPC. In vitro, the XPC:RAD23A dimer has NER activity. Can stabilize XPC. Its function is as follows. (Microbial infection) Involved in Vpr-dependent replication of HIV-1 in non-proliferating cells and primary macrophages. Required for the association of HIV-1 Vpr with the host proteasome. The chain is UV excision repair protein RAD23 homolog A (RAD23A) from Homo sapiens (Human).